Here is a 322-residue protein sequence, read N- to C-terminus: Phosphatidylserine decarboxylase proenzyme (322 aa).

Active-site charge relay system; for autoendoproteolytic cleavage activity residues include D90, H147, and S254. S254 serves as the catalytic Schiff-base intermediate with substrate; via pyruvic acid; for decarboxylase activity. Pyruvic acid (Ser); by autocatalysis is present on S254. The disordered stretch occupies residues 297–322 (PAPLPAEEIKAEHDASPLVDNKKDDT). The span at 303-322 (EEIKAEHDASPLVDNKKDDT) shows a compositional bias: basic and acidic residues.

This sequence belongs to the phosphatidylserine decarboxylase family. PSD-B subfamily. Prokaryotic type I sub-subfamily. Heterodimer of a large membrane-associated beta subunit and a small pyruvoyl-containing alpha subunit. Pyruvate serves as cofactor. Post-translationally, is synthesized initially as an inactive proenzyme. Formation of the active enzyme involves a self-maturation process in which the active site pyruvoyl group is generated from an internal serine residue via an autocatalytic post-translational modification. Two non-identical subunits are generated from the proenzyme in this reaction, and the pyruvate is formed at the N-terminus of the alpha chain, which is derived from the carboxyl end of the proenzyme. The autoendoproteolytic cleavage occurs by a canonical serine protease mechanism, in which the side chain hydroxyl group of the serine supplies its oxygen atom to form the C-terminus of the beta chain, while the remainder of the serine residue undergoes an oxidative deamination to produce ammonia and the pyruvoyl prosthetic group on the alpha chain. During this reaction, the Ser that is part of the protease active site of the proenzyme becomes the pyruvoyl prosthetic group, which constitutes an essential element of the active site of the mature decarboxylase.

It localises to the cell membrane. The catalysed reaction is a 1,2-diacyl-sn-glycero-3-phospho-L-serine + H(+) = a 1,2-diacyl-sn-glycero-3-phosphoethanolamine + CO2. The protein operates within phospholipid metabolism; phosphatidylethanolamine biosynthesis; phosphatidylethanolamine from CDP-diacylglycerol: step 2/2. Its function is as follows. Catalyzes the formation of phosphatidylethanolamine (PtdEtn) from phosphatidylserine (PtdSer). The chain is Phosphatidylserine decarboxylase proenzyme from Salmonella typhi.